The chain runs to 126 residues: Fluoride-specific ion channel FluC (126 aa).

Transmembrane regions (helical) follow at residues 2-22, 37-57, 65-85, and 99-119; these read LITV…RYLI, VGVL…VVLA, LSPF…AFSL, and AALY…LGMM. Na(+)-binding residues include Gly75 and Thr78.

The protein belongs to the fluoride channel Fluc/FEX (TC 1.A.43) family.

Its subcellular location is the cell inner membrane. The catalysed reaction is fluoride(in) = fluoride(out). With respect to regulation, na(+) is not transported, but it plays an essential structural role and its presence is essential for fluoride channel function. Its function is as follows. Fluoride-specific ion channel. Important for reducing fluoride concentration in the cell, thus reducing its toxicity. This Ruegeria sp. (strain TM1040) (Silicibacter sp.) protein is Fluoride-specific ion channel FluC.